The primary structure comprises 360 residues: Phospho-N-acetylmuramoyl-pentapeptide-transferase (360 aa).

The next 10 helical transmembrane spans lie at 21–41 (YVTFRAILGLMTALVFCLWWG), 74–94 (MGGILILAGIFISVLLWGDLG), 97–117 (YVWVVLFVLASFGLIGFIDDY), 135–155 (ILQSLAAIIIAFYLYASADTV), 168–188 (IMPQMGAFFIVLAYFTIVGSS), 199–219 (GLAIMPTVMVAAAFALIAYLS), 236–256 (AGELVIVCTAIVGAGLGFLWF), 263–283 (VFMGDVGSLALGAALGAIAVL), 288–308 (ILLVIMGGVFVMETVSVILQV), and 338–358 (VIVRFWIISLFLVMLGLATLK).

It belongs to the glycosyltransferase 4 family. MraY subfamily. Mg(2+) is required as a cofactor.

Its subcellular location is the cell inner membrane. The enzyme catalyses UDP-N-acetyl-alpha-D-muramoyl-L-alanyl-gamma-D-glutamyl-meso-2,6-diaminopimeloyl-D-alanyl-D-alanine + di-trans,octa-cis-undecaprenyl phosphate = di-trans,octa-cis-undecaprenyl diphospho-N-acetyl-alpha-D-muramoyl-L-alanyl-D-glutamyl-meso-2,6-diaminopimeloyl-D-alanyl-D-alanine + UMP. The protein operates within cell wall biogenesis; peptidoglycan biosynthesis. Catalyzes the initial step of the lipid cycle reactions in the biosynthesis of the cell wall peptidoglycan: transfers peptidoglycan precursor phospho-MurNAc-pentapeptide from UDP-MurNAc-pentapeptide onto the lipid carrier undecaprenyl phosphate, yielding undecaprenyl-pyrophosphoryl-MurNAc-pentapeptide, known as lipid I. This is Phospho-N-acetylmuramoyl-pentapeptide-transferase from Shewanella violacea (strain JCM 10179 / CIP 106290 / LMG 19151 / DSS12).